Reading from the N-terminus, the 271-residue chain is D-methionine-binding lipoprotein MetQ (271 aa).

Residues 1–22 (MAFKFKTFAAVGALIGSLALVG) form the signal peptide. Residue Cys-23 is the site of N-palmitoyl cysteine attachment. A lipid anchor (S-diacylglycerol cysteine) is attached at Cys-23.

This sequence belongs to the NlpA lipoprotein family.

The protein localises to the cell membrane. In terms of biological role, this protein is a component of a D-methionine permease, a binding protein-dependent, ATP-driven transport system. The protein is D-methionine-binding lipoprotein MetQ (metQ) of Escherichia coli (strain K12).